The primary structure comprises 166 residues: Orotate phosphoribosyltransferase (166 aa).

5-phospho-alpha-D-ribose 1-diphosphate-binding positions include Arg83, Lys84, Arg86, His88, and 108–116; that span reads EDVVTTGNS. The orotate site is built by Thr112 and Arg140.

Belongs to the purine/pyrimidine phosphoribosyltransferase family. PyrE subfamily. In terms of assembly, homodimer. The cofactor is Mg(2+).

It catalyses the reaction orotidine 5'-phosphate + diphosphate = orotate + 5-phospho-alpha-D-ribose 1-diphosphate. The protein operates within pyrimidine metabolism; UMP biosynthesis via de novo pathway; UMP from orotate: step 1/2. Its function is as follows. Catalyzes the transfer of a ribosyl phosphate group from 5-phosphoribose 1-diphosphate to orotate, leading to the formation of orotidine monophosphate (OMP). This chain is Orotate phosphoribosyltransferase, found in Thermoplasma volcanium (strain ATCC 51530 / DSM 4299 / JCM 9571 / NBRC 15438 / GSS1).